Here is a 397-residue protein sequence, read N- to C-terminus: Argininosuccinate synthase (397 aa).

ATP-binding positions include 9–17 (AFSGGLDTS) and Ala-35. 2 residues coordinate L-citrulline: Tyr-88 and Ser-93. Residue Gly-117 coordinates ATP. L-aspartate is bound by residues Thr-119, Asn-123, and Asp-124. L-citrulline is bound at residue Asn-123. Arg-127 serves as a coordination point for L-citrulline.

This sequence belongs to the argininosuccinate synthase family. Type 1 subfamily. In terms of assembly, homotetramer.

The protein localises to the cytoplasm. It carries out the reaction L-citrulline + L-aspartate + ATP = 2-(N(omega)-L-arginino)succinate + AMP + diphosphate + H(+). It functions in the pathway amino-acid biosynthesis; L-arginine biosynthesis; L-arginine from L-ornithine and carbamoyl phosphate: step 2/3. The chain is Argininosuccinate synthase from Xanthomonas campestris pv. campestris (strain ATCC 33913 / DSM 3586 / NCPPB 528 / LMG 568 / P 25).